The primary structure comprises 331 residues: Ornithine carbamoyltransferase (331 aa).

Carbamoyl phosphate contacts are provided by residues 55–58, Gln82, Arg106, and 133–136; these read STRT and HPTQ. L-ornithine contacts are provided by residues Asn166, Asp230, and 234-235; that span reads SM. Carbamoyl phosphate-binding positions include 272–273 and Arg317; that span reads CL.

This sequence belongs to the aspartate/ornithine carbamoyltransferase superfamily. OTCase family.

The protein resides in the cytoplasm. The enzyme catalyses carbamoyl phosphate + L-ornithine = L-citrulline + phosphate + H(+). Its pathway is amino-acid biosynthesis; L-arginine biosynthesis; L-arginine from L-ornithine and carbamoyl phosphate: step 1/3. Its function is as follows. Reversibly catalyzes the transfer of the carbamoyl group from carbamoyl phosphate (CP) to the N(epsilon) atom of ornithine (ORN) to produce L-citrulline. This is Ornithine carbamoyltransferase from Neisseria gonorrhoeae (strain ATCC 700825 / FA 1090).